Here is a 1188-residue protein sequence, read N- to C-terminus: MKKKQTVQGTFSKLFGKKHTTTPSTSLYATNPPWIFTQEAPEEGTGGFDGIYYGDNRFNTVSESGTATLKARPRVRPLLTFLPLNAQENHGLAVPTPSVPDDFADKEVTGTSSLVNGNLRLYSSVGDLRPGQYGQDLLIPPPPPGPAPGPPQDISEPPGGSPLPSPPSTAPPPPPLLLEPPPPPSMAPPPPPVLEALSPPHTLSSPSIPTPPDFIPPAPPLAFLAPPPPPVPAPAPPAPASPHTVGTRLFPPGGVTKWKSDVALNGRQAEATRASPPRSPAEPKGSALGPNPEPHLTFPRSFKVPPPTPVRTSSIPVQEAQEAPRKEEGATKKAPSRLPLPPSFHIRPASQVYPDRAPEPDCPGELKATAPASPRLGQSQSQADERAGTPPPAPPLPPPAPPLPPPAPPLPPAAPPLPCAQKAAHPPAGFTKTPKSSSPALKPKPNPPSPENTASSAPVDWRDPSQMEKLRNELAAYLCGSRREDRFLSHRPGPTVAPQSKEGKKGPRLPEKETLLSLPAKDTPPGVPEKSLGGSSLTETEAAPSLTLPSVDYIPQDSPTPSVRQIRNELEARLSSAAEKEAKPSIGSLPPKPRLEGGRICENGADDDKLSKPVAKNLPPQSTTLLPTTSLQPKAMLGPAIPPKATPEPAIPPKATLWPATPPKATLGPATPLKATSGPTTPLKATSGPAIASTATTLPTTTSQLMAEKDSGPAGQPEKPASQEVSTPSQARGEGSPSEATRLPTQGARSSAAFPPKTSPGGGEVPCLYKPHCHQSSLSREVAVVMPTLARGGAAGPGEPVEVKEPPGLPAKPPASAQPTDELLRHPVTGEVVERGSPMALLLAARQRAQKGRSVGAALGRSSLPGSLRDHSHQAEASSDSIFHSQGTPNSFTVVPKLPKEAEKDSPLTTEIPNKWGPRLGRDAEGTELSRRHNWTKPEPQAPVAWERVAPSNLPQGHPLPKSFSSPPSPSNKREEEEEEFNFEVIPPPPEFSNDPEPPAPALQYLGRQSSPPRNNYSDLRQLPNAGPGAPPALGFSRFPAGARYAGAGGLERFSGGGRSLIKKRLYVGEPHRGPGLPHGGTGRSLSSPNCFGPQPGGPEMRRVNSAGRAPPGGLHAPRLSLEGAARGAAEAKHKAPGSADYGFAPAAGRSPYTTTRYGSPINTFTVRPGTRHPISYVCSGAHRKATS.

4 disordered regions span residues 126 to 468 (GDLR…SQME), 484 to 771 (EDRF…LYKP), 790 to 823 (ARGGAAGPGEPVEVKEPPGLPAKPPASAQPTDEL), and 847 to 1039 (QRAQ…FSRF). Pro residues-rich tracts occupy residues 139–151 (IPPPPPGPAPGPP), 159–193 (GGSPLPSPPSTAPPPPPLLLEPPPPPSMAPPPPPV), and 208–240 (IPTPPDFIPPAPPLAFLAPPPPPVPAPAPPAPA). S260 is modified (phosphoserine). Basic and acidic residues predominate over residues 322–331 (EAPRKEEGAT). A compositionally biased stretch (pro residues) spans 389–418 (TPPPAPPLPPPAPPLPPPAPPLPPAAPPLP). A compositionally biased stretch (low complexity) spans 432–441 (KTPKSSSPAL). Composition is skewed to basic and acidic residues over residues 501-514 (KEGKKGPRLPEKET) and 566-583 (IRNELEARLSSAAEKEAK). Over residues 618 to 633 (LPPQSTTLLPTTSLQP) the composition is skewed to low complexity. Residues 640–652 (AIPPKATPEPAIP) show a composition bias toward pro residues. A Phosphothreonine modification is found at T666. Over residues 689–703 (PAIASTATTLPTTTS) the composition is skewed to low complexity. Residues 875-893 (AEASSDSIFHSQGTPNSFT) are compositionally biased toward polar residues. The segment covering 920–931 (LGRDAEGTELSR) has biased composition (basic and acidic residues). Positions 986-1001 (IPPPPEFSNDPEPPAP) are enriched in pro residues. Over residues 1007–1019 (GRQSSPPRNNYSD) the composition is skewed to polar residues. Low complexity predominate over residues 1026–1035 (AGPGAPPALG). At R1044 the chain carries Asymmetric dimethylarginine. Residues 1069 to 1160 (GEPHRGPGLP…SPYTTTRYGS (92 aa)) form a disordered region. An omega-N-methylarginine mark is found at R1073 and R1084. Residue R1157 is modified to Asymmetric dimethylarginine.

This is an uncharacterized protein from Homo sapiens (Human).